The chain runs to 339 residues: Annexin A2 (339 aa).

At Ser-2 the chain carries N-acetylserine. An S100A10-binding site region spans residues 2–24 (STVHEILCKLSLEGDHSTPPSAY). Position 24 is a phosphotyrosine; by SRC (Tyr-24). Ser-26 carries the phosphoserine; by PKC modification. Annexin repeat units lie at residues 33 to 104 (FDAE…GLLK) and 105 to 176 (TPAQ…ALAK). The residue at position 49 (Lys-49) is an N6-acetyllysine; alternate. Residue Lys-49 forms a Glycyl lysine isopeptide (Lys-Gly) (interchain with G-Cter in SUMO1); alternate linkage. Lys-49 participates in a covalent cross-link: Glycyl lysine isopeptide (Lys-Gly) (interchain with G-Cter in SUMO2); alternate. Lys-152 carries the N6-acetyllysine modification. Ser-184 bears the Phosphoserine mark. 2 Annexin repeats span residues 189-261 (ELID…NLVQ) and 265-336 (NKPL…YLCG). Tyr-199 bears the Phosphotyrosine mark. Lys-227 carries the N6-acetyllysine modification.

Belongs to the annexin family. In terms of assembly, heterotetramer containing 2 light chains of S100A10/p11 and 2 heavy chains of ANXA2/p36. Interacts with ATP1B1. Interacts with DYSF. Interacts with COCH. Interacts (via repeat Annexin 1) with PCSK9 (via the C-terminal domain); the interaction inhibits the degradation of LDLR. Interacts with CEACAM1 (via the cytoplasmic domain); this interaction is regulated by phosphorylation of CEACAM1. Interacts with APPL2 and APPL1; targets APPL2 to endosomes and acting in parallel to RAB5A. Interacts with S100A4. May interact with UBAP2. Interacts with PLEKHG4B; this interaction is required for PLEKHG4B localization to cell-cell adhesions. Interacts with FAM13A. Interacts with salivary cystatin-L2 (via loop 2) from the tick Ixodes scapularis; the interaction results in reduced activation of mouse NLRC4 inflammasome formation upon Anaplasma phagocytophilum infection. Post-translationally, ISGylated.

The protein resides in the secreted. The protein localises to the extracellular space. It is found in the extracellular matrix. It localises to the basement membrane. Its subcellular location is the melanosome. The protein resides in the early endosome. Its function is as follows. Calcium-regulated membrane-binding protein whose affinity for calcium is greatly enhanced by anionic phospholipids. It binds two calcium ions with high affinity. May be involved in heat-stress response. Inhibits PCSK9-enhanced LDLR degradation, probably reduces PCSK9 protein levels via a translational mechanism but also competes with LDLR for binding with PCSK9. Binds to endosomes damaged by phagocytosis of particulate wear debris and participates in endosomal membrane stabilization, thereby limiting NLRP3 inflammasome activation. Required for endothelial cell surface plasmin generation and may support fibrinolytic surveillance and neoangiogenesis. In terms of biological role, (Microbial infection) Regulates the formation of the NLRC4 inflammasome triggered by Anaplasma phagocytophilum infection. (Microbial infection) Protects against Klebsiella pneumoniae infection. Attenuates bacteria-induced pulmonary inflammation and promotes intro-abdominal pathogen clearance. Promotes anti-inflammatory responses by facilitating TLR4 internalization and translocation into early endosomal membranes; this leads to activation of TRAM-dependent endosomal signaling and release of anti-inflammatory cytokines. Functionally, (Microbial infection) Promotes macrophage phagocytic efficiency towards Cryptococcus neoformans and ability to control fungal infection inside the cells. Its function is as follows. (Microbial infection) Contributes to protection against Pseudomonas aeruginosa infection by regulating autophagy via the AKT1-mTOR-ULK1/2 signaling pathway and activation of Rho GTPases via FAM13A-mediated mechanism. This Mus musculus (Mouse) protein is Annexin A2 (Anxa2).